Here is a 398-residue protein sequence, read N- to C-terminus: NADH-quinone oxidoreductase subunit D (398 aa).

It belongs to the complex I 49 kDa subunit family. As to quaternary structure, NDH-1 is composed of 14 different subunits. Subunits NuoB, C, D, E, F, and G constitute the peripheral sector of the complex.

Its subcellular location is the cell inner membrane. The enzyme catalyses a quinone + NADH + 5 H(+)(in) = a quinol + NAD(+) + 4 H(+)(out). Functionally, NDH-1 shuttles electrons from NADH, via FMN and iron-sulfur (Fe-S) centers, to quinones in the respiratory chain. The immediate electron acceptor for the enzyme in this species is believed to be ubiquinone. Couples the redox reaction to proton translocation (for every two electrons transferred, four hydrogen ions are translocated across the cytoplasmic membrane), and thus conserves the redox energy in a proton gradient. In Anaplasma marginale (strain St. Maries), this protein is NADH-quinone oxidoreductase subunit D.